The sequence spans 207 residues: Guanylate kinase (207 aa).

The 179-residue stretch at 3 to 181 folds into the Guanylate kinase-like domain; the sequence is GLLFVVSAAS…ALHDLESVIT (179 aa). Position 10–17 (10–17) interacts with ATP; sequence AASGTGKT.

Belongs to the guanylate kinase family.

It localises to the cytoplasm. It carries out the reaction GMP + ATP = GDP + ADP. In terms of biological role, essential for recycling GMP and indirectly, cGMP. This chain is Guanylate kinase, found in Acinetobacter baylyi (strain ATCC 33305 / BD413 / ADP1).